Reading from the N-terminus, the 539-residue chain is Acid-sensing ion channel 4 (539 aa).

The Cytoplasmic portion of the chain corresponds to 1–68; sequence MPIEIVCKIK…GPGPHGLRRT (68 aa). Residues 69-89 form a helical membrane-spanning segment; it reads LWALALLTSLAAFLYQAASLA. The Extracellular portion of the chain corresponds to 90 to 438; the sequence is RGYLTRPHLV…EQQAAYGLSA (349 aa). Cystine bridges form between cysteine 118–cysteine 202 and cysteine 180–cysteine 187. N-linked (GlcNAc...) asparagine glycosylation is found at asparagine 191, asparagine 243, asparagine 341, and asparagine 376. Intrachain disulfides connect cysteine 296–cysteine 375, cysteine 318–cysteine 371, cysteine 322–cysteine 369, cysteine 331–cysteine 353, and cysteine 333–cysteine 345. The chain crosses the membrane as a helical span at residues 439–459; the sequence is LLGDLGGQMGLFIGASILTLL. The GAS motif; ion selectivity filter signature appears at 452–454; that stretch reads GAS. The Cytoplasmic portion of the chain corresponds to 460–539; that stretch reads EILDYIYEVS…PGSLFEDFAC (80 aa). The segment at 500–531 is disordered; sequence KEQSPCPSRGRAEGGGASSLLPNHHHPHGPPG.

Belongs to the amiloride-sensitive sodium channel (TC 1.A.6) family. ASIC4 subfamily. In terms of assembly, homotrimer. Heterotrimer; with other ASIC proteins producing functional channels.

The protein resides in the cell membrane. Does not exhibit measurable stand-alone pH-gated sodium channel activity but may form pH-gated heterotrimeric sodium channels. Its activity could also depend on alternative gating mechanisms. The chain is Acid-sensing ion channel 4 from Mus musculus (Mouse).